The sequence spans 303 residues: Pyridoxal 5'-phosphate synthase subunit PdxS (303 aa).

Asp-33 lines the D-ribose 5-phosphate pocket. Lys-90 serves as the catalytic Schiff-base intermediate with D-ribose 5-phosphate. Residue Gly-162 participates in D-ribose 5-phosphate binding. Arg-174 contributes to the D-glyceraldehyde 3-phosphate binding site. D-ribose 5-phosphate contacts are provided by residues Gly-223 and 244–245; that span reads GS.

It belongs to the PdxS/SNZ family. In the presence of PdxT, forms a dodecamer of heterodimers.

The catalysed reaction is aldehydo-D-ribose 5-phosphate + D-glyceraldehyde 3-phosphate + L-glutamine = pyridoxal 5'-phosphate + L-glutamate + phosphate + 3 H2O + H(+). The protein operates within cofactor biosynthesis; pyridoxal 5'-phosphate biosynthesis. Its function is as follows. Catalyzes the formation of pyridoxal 5'-phosphate from ribose 5-phosphate (RBP), glyceraldehyde 3-phosphate (G3P) and ammonia. The ammonia is provided by the PdxT subunit. Can also use ribulose 5-phosphate and dihydroxyacetone phosphate as substrates, resulting from enzyme-catalyzed isomerization of RBP and G3P, respectively. This chain is Pyridoxal 5'-phosphate synthase subunit PdxS, found in Mycobacterium avium (strain 104).